The sequence spans 755 residues: Bacteriophytochrome (755 aa).

Position 24 (C24) interacts with a tetrapyrrole. Residues 26–94 form the PAS domain; it reads REPIHIPGSI…LQAALPPGCP (69 aa). The interval 95–504 is chromophore binding domain; that stretch reads DALQYRATLD…RDTLTGALGE (410 aa). In terms of domain architecture, GAF spans 152–316; it reads NLRALAEVAT…YLGRLLSLQV (165 aa). Positions 529–747 constitute a Histidine kinase domain; it reads VISHHMQEPV…TFRCWLPDAG (219 aa). Position 532 is a phosphohistidine; by autocatalysis (H532).

In the N-terminal section; belongs to the phytochrome family. Post-translationally, contains one covalently linked tetrapyrrole chromophore. Lacks the cysteine conserved in plant phytochromes (at the position of Met-259) that binds chromophore. An engineered sequence used for X-ray crystallography forms a thioether link to biliverdin through Cys-24. The natural sequence can bind phycocyanobilin and phytochromobilin in vitro, but the identity of the natural chromophore is unknown.

The enzyme catalyses ATP + protein L-histidine = ADP + protein N-phospho-L-histidine.. Its function is as follows. Photoreceptor which exists in two forms that are reversibly interconvertible by light: the R form that absorbs maximally in the red region of the spectrum and the FR form that absorbs maximally in the far-red region. Also has a slight blue shift for the far-red maximum. Could also absorb green light. May participate in regulating pigment synthesis like the carotenoid deinoxanthin which could protect the bacterium from intense visible light. The chain is Bacteriophytochrome (bphP) from Deinococcus radiodurans (strain ATCC 13939 / DSM 20539 / JCM 16871 / CCUG 27074 / LMG 4051 / NBRC 15346 / NCIMB 9279 / VKM B-1422 / R1).